Here is a 275-residue protein sequence, read N- to C-terminus: Acetyl-coenzyme A carboxylase carboxyl transferase subunit beta (275 aa).

The 258-residue stretch at 18–275 (KDNAGPAVPS…IHRLGGEMHA (258 aa)) folds into the CoA carboxyltransferase N-terminal domain. The interval 23-47 (PAVPSNTHSSKSNGNPVSEMKENKR) is disordered. The span at 26–38 (PSNTHSSKSNGNP) shows a compositional bias: polar residues.

The protein belongs to the AccD/PCCB family. In terms of assembly, acetyl-CoA carboxylase is a heterohexamer composed of biotin carboxyl carrier protein (AccB), biotin carboxylase (AccC) and two subunits each of ACCase subunit alpha (AccA) and ACCase subunit beta (AccD).

Its subcellular location is the cytoplasm. It carries out the reaction N(6)-carboxybiotinyl-L-lysyl-[protein] + acetyl-CoA = N(6)-biotinyl-L-lysyl-[protein] + malonyl-CoA. It participates in lipid metabolism; malonyl-CoA biosynthesis; malonyl-CoA from acetyl-CoA: step 1/1. Its function is as follows. Component of the acetyl coenzyme A carboxylase (ACC) complex. Biotin carboxylase (BC) catalyzes the carboxylation of biotin on its carrier protein (BCCP) and then the CO(2) group is transferred by the transcarboxylase to acetyl-CoA to form malonyl-CoA. The chain is Acetyl-coenzyme A carboxylase carboxyl transferase subunit beta from Alkaliphilus oremlandii (strain OhILAs) (Clostridium oremlandii (strain OhILAs)).